We begin with the raw amino-acid sequence, 296 residues long: GTP-binding protein GEM (296 aa).

2 disordered regions span residues 1 to 20 (MTLN…PQQQ) and 37 to 68 (PHQY…SVIS). Over residues 57–68 (SWSSDSTDSVIS) the composition is skewed to low complexity. GTP-binding positions include 82–89 (GEQGVGKS) and 191–194 (NKSD). Residues 266–285 (ARRFWGKIVAKNNKNMAFKL) are calmodulin-binding.

This sequence belongs to the small GTPase superfamily. RGK family. In terms of assembly, interacts with calmodulin in a Ca(2+)-dependent manner. Binds ROCK1. Post-translationally, phosphorylated on tyrosine residues.

The protein localises to the cell membrane. In terms of biological role, could be a regulatory protein, possibly participating in receptor-mediated signal transduction at the plasma membrane. Has guanine nucleotide-binding activity but undetectable intrinsic GTPase activity. In Pongo abelii (Sumatran orangutan), this protein is GTP-binding protein GEM (GEM).